The primary structure comprises 236 residues: Protein CUSTOS (236 aa).

Disordered regions lie at residues 1 to 57 and 83 to 236; these read MSES…GTTP and VEPA…KKDE. Basic and acidic residues-rich tracts occupy residues 10–51 and 156–165; these read NTAR…HDGN and EKTEEKSTKE. The Nucleolar localization signal (NLS1) motif lies at 173-181; sequence KMKKKKKRK. Over residues 182 to 196 the composition is skewed to basic and acidic residues; it reads TSSEESQDKVNHQTE. Over residues 197-210 the composition is skewed to polar residues; that stretch reads KQSNVEGNQEQTTA. Positions 211 to 219 match the Nucleolar localization signal (NLS2) motif; sequence GERLKKKKK. Over residues 214–227 the composition is skewed to basic residues; that stretch reads LKKKKKKKKKKRKK.

This sequence belongs to the CUSTOS family. In terms of assembly, interacts (via NLS1 and NLS2) with dvl2; the interaction is negatively regulated by Wnt stimulation. Interacts with csnk1a1. Interacts with ctnnb1; the interaction is positively regulated by Wnt stimulation. Post-translationally, phosphorylated by ck1/csnk1a1.

Its subcellular location is the nucleus envelope. Functionally, essential for Spemann-Mangold organizer formation and subsequent anterior head development in the embryo. Inhibits canonical Wnt signaling pathway by antagonizing nuclear import of beta-catenin (ctnnb1) during embryogenesis. In Danio rerio (Zebrafish), this protein is Protein CUSTOS.